The chain runs to 544 residues: Serine/threonine-protein kinase bur1 (544 aa).

A Protein kinase domain is found at 25 to 326; sequence FEFLGKLGEG…AIDALKHPYF (302 aa). ATP is bound by residues 31-39 and lysine 54; that span reads LGEGTFGEV. Aspartate 155 acts as the Proton acceptor in catalysis. Residues 357-544 are disordered; that stretch reads AAMPPAPAGG…ERVDRGPYRR (188 aa). Polar residues predominate over residues 374 to 403; that stretch reads GGWSTNSGSRTGAETRNPRISSAARSQGNQ. Basic and acidic residues-rich tracts occupy residues 419 to 438, 456 to 466, 488 to 511, and 532 to 544; these read RGNEELKDPNHSFSSRHRDG, HSDKTGRDRGY, DRNRDRDQGTAISDRRGSYYDKSH, and NYRERVDRGPYRR.

The protein belongs to the protein kinase superfamily. CMGC Ser/Thr protein kinase family. CDC2/CDKX subfamily.

The protein localises to the nucleus. The enzyme catalyses L-seryl-[protein] + ATP = O-phospho-L-seryl-[protein] + ADP + H(+). The catalysed reaction is L-threonyl-[protein] + ATP = O-phospho-L-threonyl-[protein] + ADP + H(+). It catalyses the reaction [DNA-directed RNA polymerase] + ATP = phospho-[DNA-directed RNA polymerase] + ADP + H(+). Its function is as follows. Serine/threonine-protein kinase involved in transcription regulation. Phosphorylates the UBC2/RAD6 ubiquitin-conjugating enzyme (E2), leading to monoubiquitination of histone H2B and the silencing of telomeric-associated genes. Also required for histone H3 methylation. Necessary for the recovery from pheromone-induced growth arrest in the cell cycle G1 phase. The chain is Serine/threonine-protein kinase bur1 (ptkA) from Emericella nidulans (strain FGSC A4 / ATCC 38163 / CBS 112.46 / NRRL 194 / M139) (Aspergillus nidulans).